Here is a 151-residue protein sequence, read N- to C-terminus: MAAPQEARREPIQAVQVFGRKKTATAVAYCKRGHGVLRVNGRPLDLVEPRLLQYKLQEPILLLGKEKFSGVDIRVTVKGGGHVAQVYAIRQAISKALIAFYQKYVDEASKKEIKDILVQYDRSLLVADPRRCEPKKFGGPGARARYQKSYR.

This sequence belongs to the universal ribosomal protein uS9 family.

In Spodoptera frugiperda (Fall armyworm), this protein is Small ribosomal subunit protein uS9 (RpS16).